The primary structure comprises 141 residues: MRARTRRLYTFGIAAALIVAAAALAFFALRENANLFYTPEVLAEKGLPREGREVKVGGWVEPGSLTYADGGATMRFTVIDNSPSTITVSFNGVAPDLFREGQGVVATGTFTPEGEFTARQLLAKHDENYQPRELKPLEAGG.

Residues 1 to 7 (MRARTRR) lie on the Cytoplasmic side of the membrane. The helical; Signal-anchor for type II membrane protein transmembrane segment at 8–28 (LYTFGIAAALIVAAAALAFFA) threads the bilayer. Residues 29-141 (LRENANLFYT…RELKPLEAGG (113 aa)) are Periplasmic-facing. Heme is bound by residues His125 and Tyr129.

The protein belongs to the CcmE/CycJ family.

Its subcellular location is the cell inner membrane. Its function is as follows. Heme chaperone required for the biogenesis of c-type cytochromes. Transiently binds heme delivered by CcmC and transfers the heme to apo-cytochromes in a process facilitated by CcmF and CcmH. The polypeptide is Cytochrome c-type biogenesis protein CcmE (Hyphomonas neptunium (strain ATCC 15444)).